The sequence spans 154 residues: SsrA-binding protein (154 aa).

Residues 134–154 (ETLRRRDAKREVERALKEKNR) are disordered.

It belongs to the SmpB family.

It is found in the cytoplasm. Functionally, required for rescue of stalled ribosomes mediated by trans-translation. Binds to transfer-messenger RNA (tmRNA), required for stable association of tmRNA with ribosomes. tmRNA and SmpB together mimic tRNA shape, replacing the anticodon stem-loop with SmpB. tmRNA is encoded by the ssrA gene; the 2 termini fold to resemble tRNA(Ala) and it encodes a 'tag peptide', a short internal open reading frame. During trans-translation Ala-aminoacylated tmRNA acts like a tRNA, entering the A-site of stalled ribosomes, displacing the stalled mRNA. The ribosome then switches to translate the ORF on the tmRNA; the nascent peptide is terminated with the 'tag peptide' encoded by the tmRNA and targeted for degradation. The ribosome is freed to recommence translation, which seems to be the essential function of trans-translation. This chain is SsrA-binding protein, found in Halalkalibacterium halodurans (strain ATCC BAA-125 / DSM 18197 / FERM 7344 / JCM 9153 / C-125) (Bacillus halodurans).